The following is an 88-amino-acid chain: Alpha-conotoxin GVIIIB (88 aa).

The first 20 residues, 1-20, serve as a signal peptide directing secretion; that stretch reads MMSKMGAMFVLLLLFTLASS. Residues 21 to 43 constitute a propeptide that is removed on maturation; it reads QQEGDVQARKTRPKSDFYRALPR. Threonine amide is present on Thr-87.

The protein belongs to the conotoxin S superfamily. Contains 5 disulfide bonds. In terms of processing, the predominant peptide contains 2 hydroxyprolines, while 2 minor peptides contains 1 and 3 hydroxyprolines. As to expression, expressed by the venom duct.

It localises to the secreted. Functionally, alpha-conotoxins act on postsynaptic membranes, they bind to the nicotinic acetylcholine receptors (nAChR) and thus inhibit them. This toxin shows high activity on alpha-9-alpha-10 (CHRNA9-CHRNA10) (IC(50)=9.79 nM). It also shows weak activity on alpha-3-beta-2 (CHRNA3-CHRNB2) (IC(50)~1 uM), alpha-6/alpha-3-beta-2-beta-3 (CHRNA6/CHRNA3-CHRNB2-CHRNB3) (IC(50)~1 uM). The toxin binds to the same or overlapping binding sites than conotoxin RgIA (AC P0C1D0). The protein is Alpha-conotoxin GVIIIB of Conus geographus (Geography cone).